The chain runs to 226 residues: Transmembrane emp24 domain-containing protein 5 (226 aa).

The first 24 residues, 1-24 (MGDKTWLPFPVVLLAALLLPRAAG), serve as a signal peptide directing secretion. The Lumenal portion of the chain corresponds to 25-193 (FTPSLDSDFT…IQESNFDRVN (169 aa)). The GOLD domain maps to 42-123 (KECFYQPMPL…EKVIFFELIL (82 aa)). A helical transmembrane segment spans residues 194–214 (FWSMVNLVVMVVVSAIQVYML). Topologically, residues 215–226 (KSLFEDKRKSRT) are cytoplasmic. The short motif at 217–218 (LF) is the Mediates export from ER element.

Belongs to the EMP24/GP25L family. Interacts with TMED9 and TMED10.

It localises to the endoplasmic reticulum membrane. It is found in the golgi apparatus. The protein localises to the cis-Golgi network membrane. The protein resides in the endoplasmic reticulum-Golgi intermediate compartment membrane. Its function is as follows. Potential role in vesicular protein trafficking, mainly in the early secretory pathway. Required for the maintenance of the Golgi apparatus; involved in protein exchange between Golgi stacks during assembly. Probably not required for COPI-vesicle-mediated retrograde transport. This Bos taurus (Bovine) protein is Transmembrane emp24 domain-containing protein 5 (TMED5).